The following is a 166-amino-acid chain: Urease accessory protein UreE (166 aa).

Residues 132-156 form a disordered region; sequence FQPEHGAYGGGHHHSRHGDEDFNYP.

The protein belongs to the UreE family.

It is found in the cytoplasm. Its function is as follows. Involved in urease metallocenter assembly. Binds nickel. Probably functions as a nickel donor during metallocenter assembly. This Pseudomonas fluorescens (strain ATCC BAA-477 / NRRL B-23932 / Pf-5) protein is Urease accessory protein UreE.